We begin with the raw amino-acid sequence, 202 residues long: Large ribosomal subunit protein uL5 (202 aa).

Over residues 1 to 17 (MSAKAATKNATKVAVKA) the composition is skewed to low complexity. The disordered stretch occupies residues 1–30 (MSAKAATKNATKVAVKAPEATTPVETKKSK).

Belongs to the universal ribosomal protein uL5 family. Component of the large ribosomal subunit.

It is found in the nucleus. Its subcellular location is the cytoplasm. In terms of biological role, component of the ribosome, a large ribonucleoprotein complex responsible for the synthesis of proteins in the cell. The small ribosomal subunit (SSU) binds messenger RNAs (mRNAs) and translates the encoded message by selecting cognate aminoacyl-transfer RNA (tRNA) molecules. The large subunit (LSU) contains the ribosomal catalytic site termed the peptidyl transferase center (PTC), which catalyzes the formation of peptide bonds, thereby polymerizing the amino acids delivered by tRNAs into a polypeptide chain. The nascent polypeptides leave the ribosome through a tunnel in the LSU and interact with protein factors that function in enzymatic processing, targeting, and the membrane insertion of nascent chains at the exit of the ribosomal tunnel. This Dictyostelium discoideum (Social amoeba) protein is Large ribosomal subunit protein uL5 (rpl11).